A 252-amino-acid chain; its full sequence is Imidazole glycerol phosphate synthase subunit HisF (252 aa).

Residues aspartate 11 and aspartate 130 contribute to the active site.

It belongs to the HisA/HisF family. In terms of assembly, heterodimer of HisH and HisF.

It is found in the cytoplasm. It carries out the reaction 5-[(5-phospho-1-deoxy-D-ribulos-1-ylimino)methylamino]-1-(5-phospho-beta-D-ribosyl)imidazole-4-carboxamide + L-glutamine = D-erythro-1-(imidazol-4-yl)glycerol 3-phosphate + 5-amino-1-(5-phospho-beta-D-ribosyl)imidazole-4-carboxamide + L-glutamate + H(+). The protein operates within amino-acid biosynthesis; L-histidine biosynthesis; L-histidine from 5-phospho-alpha-D-ribose 1-diphosphate: step 5/9. In terms of biological role, IGPS catalyzes the conversion of PRFAR and glutamine to IGP, AICAR and glutamate. The HisF subunit catalyzes the cyclization activity that produces IGP and AICAR from PRFAR using the ammonia provided by the HisH subunit. In Bacillus cereus (strain ATCC 10987 / NRS 248), this protein is Imidazole glycerol phosphate synthase subunit HisF.